Here is a 388-residue protein sequence, read N- to C-terminus: Quinolone resistance protein NorA (388 aa).

12 helical membrane passes run 5–25 (IFVL…VIPV), 42–62 (LLVA…GTLA), 69–89 (LIIC…AVGH), 99–119 (VIGG…IADI), 129–149 (FGYM…IGGF), 157–177 (MPFY…IVLI), 201–221 (WKVF…LSAF), 239–259 (DISI…IYFF), 269–289 (LTFI…LVFA), 293–313 (WSIM…RPAI), 331–351 (LNST…GALF), and 355–375 (IEAP…IVLI).

The protein belongs to the major facilitator superfamily. TCR/Tet family.

It is found in the cell membrane. In terms of biological role, involved in quinolone resistance. May constitute a membrane-associated active efflux pump of hydrophilic quinolones. The protein is Quinolone resistance protein NorA (norA) of Staphylococcus aureus (strain MSSA476).